The sequence spans 171 residues: MTNTQKAILAGGCFWGMQELIRKQPGVVSTRVGYTGGDVPNATYRNHGTHAEAVEIIYDPAVTDYRQILEFFFQIHDPTTKDRQGNDRGPSYRSAIFYTDDEQKRIALDTIADVEASGLWPGKVVTEVSPAGDFWEAEPEHQDYLQRYPNGYTCHYIRPGWKLPRRATSGS.

Residue C13 is part of the active site.

Belongs to the MsrA Met sulfoxide reductase family.

The enzyme catalyses L-methionyl-[protein] + [thioredoxin]-disulfide + H2O = L-methionyl-(S)-S-oxide-[protein] + [thioredoxin]-dithiol. The catalysed reaction is [thioredoxin]-disulfide + L-methionine + H2O = L-methionine (S)-S-oxide + [thioredoxin]-dithiol. In terms of biological role, has an important function as a repair enzyme for proteins that have been inactivated by oxidation. Catalyzes the reversible oxidation-reduction of methionine sulfoxide in proteins to methionine. This Mycolicibacterium paratuberculosis (strain ATCC BAA-968 / K-10) (Mycobacterium paratuberculosis) protein is Peptide methionine sulfoxide reductase MsrA.